Reading from the N-terminus, the 609-residue chain is Adagio protein 1 (609 aa).

Residues 1 to 17 (MEWDSGSDLSADDASSL) show a composition bias toward low complexity. Positions 1-24 (MEWDSGSDLSADDASSLADDEEGG) are disordered. One can recognise a PAS domain in the interval 32–114 (IPYPVGNLLH…SEIRKCIDEG (83 aa)). C82 carries the post-translational modification S-4a-FMN cysteine. The PAC domain occupies 118-161 (QGELLNFRKDGSPLMNRLRLTPIYGDDDTITHIIGIQFFIETDI). The 47-residue stretch at 195 to 241 (CGLFQLSDEVVSMKILSRLTPRDVASVSSVCRRLYVLTKNEDLWRRV) folds into the F-box domain. Kelch repeat units follow at residues 292–342 (SRCN…SSPP), 345–392 (RWGH…SGLA), 397–445 (RSWH…PAAW), 450–501 (RLGH…TGSG), and 516–564 (RLDH…NIPG).

Belongs to the ADAGIO family. Interacts with NFXL2. Interacts (via N-terminus) with GI and (via Kelch repeats) with ADO3. Component of an E3 ubiquitin ligase SCF(ADO1) complex composed of SKP1A/ASK1 (or SKP1B/ASK2), CUL1, RBX1 and ADO1. Also interacts with SKP1D/ASK4, SKP1K/ASK11, CRY1, PHYB, APRR1 and APRR5, and probably with SKP1N/ASK14 and SKP1S/ASK19. In terms of processing, may be ubiquitinated. Degraded in a proteasome-dependent manner. FMN binds covalently to cysteine after exposure to blue light and is reversed in the dark. In terms of tissue distribution, ubiquitously expressed with higher levels in cotyledons and leaves.

The protein localises to the nucleus. Its subcellular location is the cytoplasm. The protein operates within protein modification; protein ubiquitination. Its function is as follows. Component of an E3 ubiquitin ligase complex that plays a central role in blue light-dependent circadian cycles. Acts as a blue light photoreceptor, due to the presence of FMN, that mediates light-regulated protein degradation of critical clock components by targeting them to the proteasome complex. The SCF(ADO1) E3 ubiquitin ligase complex is involved in the regulation of circadian clock-dependent processes including the transition to flowering time, hypocotyl elongation, cotyledons and leaf movement rhythms. APRR1/TOC1 and APRR5, but not 'GIGANTEA', are proteolytic substrates of this ubiquitin ligase complex. Blue light enhances cooperative stabilization of 'GIGANTEA' and ADO1/ZTL, leading to amplification and sharpening of the expression profile of APRR1/TOC1. ADO1/ZTL interacts with ADO3, preventing the interaction of ADO3 with CDF1. This is Adagio protein 1 (ADO1) from Arabidopsis thaliana (Mouse-ear cress).